Here is a 137-residue protein sequence, read N- to C-terminus: MSFFSEFKEFAVKGNVIDLAVGVIIGGAFGKIVDSIVGDLIMPIVSKLFGGLDFSNYYVGLAGQAAGLPLAEAKKAGAVFAYGNFITVALNFAILAFIIFLMIKQINRLKKDEPAAPPAPPAEDIVLLREIRDALKK.

Helical transmembrane passes span 16 to 36 and 83 to 103; these read VIDLAVGVIIGGAFGKIVDSI and GNFITVALNFAILAFIIFLMI.

This sequence belongs to the MscL family. As to quaternary structure, homopentamer.

It localises to the cell inner membrane. Functionally, channel that opens in response to stretch forces in the membrane lipid bilayer. May participate in the regulation of osmotic pressure changes within the cell. The protein is Large-conductance mechanosensitive channel of Methylibium petroleiphilum (strain ATCC BAA-1232 / LMG 22953 / PM1).